Reading from the N-terminus, the 652-residue chain is Regulator of DNA class I crossover intermediates 1 (652 aa).

A DNA-binding region (binds DNA containing a D-loop) is located at residues 1–231 (MNWVGGSRSR…TLFERLNSLG (231 aa)). 2 disordered regions span residues 363–434 (NKTS…NIPS) and 469–506 (KISL…EDQI). Basic and acidic residues predominate over residues 377–388 (YQREYNKNERND). Polar residues predominate over residues 389–401 (LSTSFENDYYPSS). The span at 402–417 (SERKEKFENDYQEKTP) shows a compositional bias: basic and acidic residues. The span at 473-498 (DSAQSSRSTSYSPRPTDSCFSSSSDL) shows a compositional bias: low complexity.

Interacts with MSH5. Interacts with TEX11.

The protein localises to the chromosome. In terms of biological role, involved in recombination, probably acting by stabilizing recombination intermediates during meiotic crossover formation. Required for normal germline development and fertility. Required for meiotic progression, complete chromosomal synapsis and crossover formation. Binds double-stranded DNA. However, also binds branched DNA molecules, such as those containing a D-loop or Holliday junction structure. Probably not required for formation of DNA double-strand breaks (DSBs). Also binds RNA in an RNA structure-independent manner, with a preference for binding 3'-UTR regions of mRNAs; may stabilize bound RNAs. The polypeptide is Regulator of DNA class I crossover intermediates 1 (Homo sapiens (Human)).